Reading from the N-terminus, the 261-residue chain is uncharacterized protein (261 aa).

Belongs to the BtpA family.

This is an uncharacterized protein from Methanocaldococcus jannaschii (strain ATCC 43067 / DSM 2661 / JAL-1 / JCM 10045 / NBRC 100440) (Methanococcus jannaschii).